We begin with the raw amino-acid sequence, 474 residues long: MTSPIVTRFAPSPTGFLHIGGARTALFNWLYARGRCGKMLLRIEDTDRERSTTAAIDAILDGLKWLELDWDGEVIYQYSRAARHREVAEQLLASGMAYRCYATAEELAAMREKARAEGRTRLYDGMWRDRDPKDAPGDVKPTIRLRAPLTGETVIEDQVQGRVVWQNENLDDLVLLRGDGNPTYMLAVVVDDHDMGVTHVIRGDDHLINAARQKQIYDALGWTVPSMSHIPLIHGPDGSKLSKRHGALGVDAYRAMGYLPSALRNYLVRLGWSHGDQEIFSTEEMIKAFDLPAIGRSAARFDFAKLENLNGHYIRHSDDAALVRQFEDVLNYVPNGATLKAKLNDATRAQLTQAMPSLKERAKTLLELIDGAAFLFADRPLPIDAKAAALLTPDSRALIGRLHDALAAVEPWSGPATEAALRAFAETNNLKLGAVAQPLRAALTGRTTSPGIFDVLAILGRDESLGRLKDQTTS.

The 'HIGH' region signature appears at 11 to 21 (PSPTGFLHIGG). Positions 240–244 (KLSKR) match the 'KMSKS' region motif. Lys-243 contributes to the ATP binding site.

The protein belongs to the class-I aminoacyl-tRNA synthetase family. Glutamate--tRNA ligase type 1 subfamily. Monomer.

Its subcellular location is the cytoplasm. It carries out the reaction tRNA(Glu) + L-glutamate + ATP = L-glutamyl-tRNA(Glu) + AMP + diphosphate. Its function is as follows. Catalyzes the attachment of glutamate to tRNA(Glu) in a two-step reaction: glutamate is first activated by ATP to form Glu-AMP and then transferred to the acceptor end of tRNA(Glu). The polypeptide is Glutamate--tRNA ligase (Bradyrhizobium sp. (strain BTAi1 / ATCC BAA-1182)).